Reading from the N-terminus, the 161-residue chain is Alpha-crystallin A chain (161 aa).

N-acetylmethionine is present on M1. The segment at 1 to 53 (MDVTIQHPWFKRALGPFYHNRLFDQFFGEGLFEYDLLPFQSLFRTVLDSGISE) is required for complex formation with BFSP1 and BFSP2. Deamidated glutamine; partial occurs at positions 6 and 40. Positions 41 to 150 (SLFRTVLDSG…SHSERAIPVS (110 aa)) constitute a sHSP domain. K87 carries the post-translational modification N6-acetyllysine. Position 88 (H88) interacts with Zn(2+). At N89 the chain carries Deamidated asparagine; partial. Zn(2+) is bound by residues E90 and H95. S110 carries the phosphoserine modification. N111 is subject to Deamidated asparagine; partial. C119 and C130 are disulfide-bonded. Q135 carries the deamidated glutamine; partial modification. Residues 135 to 161 (QSGMDASHSERAIPVSREEKASSAPNS) form a disordered region. Residues 141–155 (SHSERAIPVSREEKA) are compositionally biased toward basic and acidic residues. H142 is a binding site for Zn(2+). S150 is a glycosylation site (O-linked (GlcNAc) serine).

It belongs to the small heat shock protein (HSP20) family. Heteromer composed of three CRYAA and one CRYAB subunits. Inter-subunit bridging via zinc ions enhances stability, which is crucial as there is no protein turn over in the lens. Can also form homodimers and homotetramers (dimers of dimers) which serve as the building blocks of homooligomers. Within homooligomers, the zinc-binding motif is created from residues of 3 different molecules. His-88 and Glu-90 from one molecule are ligands of the zinc ion, and His-95 and His-142 residues from additional molecules complete the site with tetrahedral coordination geometry. Part of a complex required for lens intermediate filament formation composed of BFSP1, BFSP2 and CRYAA. Post-translationally, undergoes age-dependent proteolytical cleavage at the C-terminus.

It is found in the cytoplasm. Its subcellular location is the nucleus. Its function is as follows. Contributes to the transparency and refractive index of the lens. In its oxidized form (absence of intramolecular disulfide bond), acts as a chaperone, preventing aggregation of various proteins under a wide range of stress conditions. Required for the correct formation of lens intermediate filaments as part of a complex composed of BFSP1, BFSP2 and CRYAA. The sequence is that of Alpha-crystallin A chain (CRYAA) from Trichechus inunguis (Amazon manatee).